A 317-amino-acid chain; its full sequence is Taste receptor type 2 member 14 (317 aa).

The Extracellular segment spans residues 1 to 7 (MGGVIKS). A helical membrane pass occupies residues 8 to 28 (IFTFVLIVEFIIGNLGNSFIA). Residues 29-55 (LVNCIDWVKGRKISSVDRILTALAISR) lie on the Cytoplasmic side of the membrane. A helical transmembrane segment spans residues 56 to 76 (ISLVWLIFGSWCVSVFFPALF). The Extracellular segment spans residues 77–87 (ATEKMFRMLTN). 2 residues coordinate cholesterol: Thr-86 and Trp-89. A helical transmembrane segment spans residues 88–108 (IWTVINHFSVWLATGLGTFYF). Topologically, residues 109–129 (LKIANFSNSIFLYLKWRVKKV) are cytoplasmic. Residues 130–150 (VLVLLLVTSVFLFLNIALINI) traverse the membrane as a helical segment. Residues 151–184 (HINASINGYRRNKTCSSDSSNFTRFSSLIVLTST) lie on the Extracellular side of the membrane. 3 N-linked (GlcNAc...) asparagine glycosylation sites follow: Asn-153, Asn-162, and Asn-171. Val-180 serves as a coordination point for cholesterol. Residues 185–205 (VFIFIPFTLSLAMFLLLIFSM) form a helical membrane-spanning segment. Residues 206-232 (WKHRKKMQHTVKISGDASTKAHRGVKS) are Cytoplasmic-facing. Residues 233–253 (VITFFLLYAIFSLSFFISVWT) form a helical membrane-spanning segment. Topologically, residues 254–261 (SERLEENL) are extracellular. Residues 262 to 282 (IILSQVMGMAYPSCHSCVLIL) form a helical membrane-spanning segment. Cholesterol-binding residues include Ser-265 and Met-268. Residues 283-317 (GNKKLRQASLSVLLWLRYMFKDGEPSGHKEFRESS) are Cytoplasmic-facing.

This sequence belongs to the G-protein coupled receptor T2R family. As to quaternary structure, core component of the TAS2R14-GNAI1 complex, consisting of TAS2R14, GNAI1, GNB1 and GNG2; within the complex interacts with GNAI1. Core component of the TAS2R14-GNAT3 complex, consisting of TAS2R14, GNAT3, GNB1 and GNG2; within the complex interacts with GNAT3. Core component of the TAS2R14-GNAS2 complex, consisting of TAS2R14, GNAS2, GNB1 and GNG2; within the complex interacts with GNAS2. Highly expressed in cerebellum, pancreas, small intestine and thymus; also expressed in adipose, aorta, skin and tongue, but at significantly lower levels. Expressed in subsets of taste receptor cells of the tongue and palate epithelium and exclusively in gustducin-positive cells. Expressed in testis.

It localises to the membrane. The catalysed reaction is Ca(2+)(in) = Ca(2+)(out). It carries out the reaction 3',5'-cyclic AMP(in) = 3',5'-cyclic AMP(out). With respect to regulation, basal activity is enhanced by binding to bitter tastants, such as flufenamic acid and aristolochic acid. Regulated by cholesterol in a concentration-dependent manner. Gustducin-linked G-protein coupled receptor that plays a role in the perception of bitterness. The activity of this receptor stimulates GNAT3, activating the gustducin G-protein pathway. Likely plays a role in sensing the chemical composition of the gastrointestinal content and other extra-oral tissues via the inhibitory G-protein pathways. This chain is Taste receptor type 2 member 14 (TAS2R14), found in Homo sapiens (Human).